We begin with the raw amino-acid sequence, 268 residues long: Acidic leucine-rich nuclear phosphoprotein 32 family member E (268 aa).

Position 1 is an N-acetylmethionine (Met-1). LRR repeat units follow at residues 18–38 (EVTE…EGLN), 43–64 (ELEF…PSLN), 65–87 (KLRK…AEKC), and 89–110 (NLTY…EALQ). Lys-68 is covalently cross-linked (Glycyl lysine isopeptide (Lys-Gly) (interchain with G-Cter in SUMO2)). In terms of domain architecture, LRRCT spans 123–161 (CEITNLEDYRESIFELLQQITYLDGFDQEDNEAPDSEEE). Composition is skewed to acidic residues over residues 149 to 216 (DQED…EEEV) and 226 to 247 (IQDE…EEEE). Positions 149–268 (DQEDNEAPDS…AEDDGEEEDD (120 aa)) are disordered. The interval 215–268 (EVGLSYLMKEEIQDEEDDDDYVEEGEEEEEEEEGGLRGEKRKRDAEDDGEEEDD) is ZID domain. The segment covering 248-259 (GGLRGEKRKRDA) has biased composition (basic and acidic residues).

It belongs to the ANP32 family. In terms of assembly, interacts with the importin alpha KPNA1 and KPNA2. Component of a SWR1-like complex, composed of EP400, KAT5/TIP60, TRRAP, BRD8, RUVBL1, RUVBL2, ING3 and ANP32E; the complex does not contain SRCAP. Interacts with H2A.Z/H2AZ1. Phosphorylated. The phosphorylation is nuclear localization signal (NLS)-dependent. Expressed in peripheral blood leukocytes, colon, small intestine, prostate, thymus, spleen, skeletal muscle, liver and kidney.

The protein localises to the cytoplasm. Its subcellular location is the nucleus. In terms of biological role, histone chaperone that specifically mediates the genome-wide removal of histone H2A.Z/H2AZ1 from the nucleosome: removes H2A.Z/H2AZ1 from its normal sites of deposition, especially from enhancer and insulator regions. Not involved in deposition of H2A.Z/H2AZ1 in the nucleosome. May stabilize the evicted H2A.Z/H2AZ1-H2B dimer, thus shifting the equilibrium towards dissociation and the off-chromatin state. Inhibits activity of protein phosphatase 2A (PP2A). Does not inhibit protein phosphatase 1. May play a role in cerebellar development and synaptogenesis. The chain is Acidic leucine-rich nuclear phosphoprotein 32 family member E (ANP32E) from Homo sapiens (Human).